A 123-amino-acid chain; its full sequence is Large ribosomal subunit protein uL18 (123 aa).

This sequence belongs to the universal ribosomal protein uL18 family. In terms of assembly, part of the 50S ribosomal subunit; part of the 5S rRNA/L5/L18/L25 subcomplex. Contacts the 5S and 23S rRNAs.

Its function is as follows. This is one of the proteins that bind and probably mediate the attachment of the 5S RNA into the large ribosomal subunit, where it forms part of the central protuberance. This Desulforudis audaxviator (strain MP104C) protein is Large ribosomal subunit protein uL18.